The sequence spans 360 residues: 3-isopropylmalate dehydrogenase (360 aa).

Residue 76–89 (GPKWDTIERDIRPE) participates in NAD(+) binding. Arginine 96, arginine 106, arginine 134, and aspartate 224 together coordinate substrate. Residues aspartate 224, aspartate 248, and aspartate 252 each coordinate Mg(2+). 282–294 (GSAPDIAGQGIAN) contacts NAD(+).

Belongs to the isocitrate and isopropylmalate dehydrogenases family. LeuB type 1 subfamily. As to quaternary structure, homodimer. It depends on Mg(2+) as a cofactor. Mn(2+) is required as a cofactor.

The protein resides in the cytoplasm. The catalysed reaction is (2R,3S)-3-isopropylmalate + NAD(+) = 4-methyl-2-oxopentanoate + CO2 + NADH. It functions in the pathway amino-acid biosynthesis; L-leucine biosynthesis; L-leucine from 3-methyl-2-oxobutanoate: step 3/4. In terms of biological role, catalyzes the oxidation of 3-carboxy-2-hydroxy-4-methylpentanoate (3-isopropylmalate) to 3-carboxy-4-methyl-2-oxopentanoate. The product decarboxylates to 4-methyl-2 oxopentanoate. The sequence is that of 3-isopropylmalate dehydrogenase from Pseudomonas syringae pv. tomato (strain ATCC BAA-871 / DC3000).